Consider the following 300-residue polypeptide: MTLSREAATQFAKVLSEALPYIRRFVGKTLVIKYGGNAMESEELKTGFARDIVLMKAVGINPVVVHGGGPQIGDLLKRLNIESHFIDGMRVTDSQTMDVVEMVLGGQVNKSIVSLINQHGGSAIGLTGKDAGLIRARKLKATRQTPEMTKPEIIDIGHVGEVTGVNAELLEMLVQGNFIPVIAPIGVGENGESYNINADLVAGKVAEALKAEKLMLLTNIAGLMDKQGNVLTGLSTAQVDALIADGTIYGGMLPKIRCALEAVQGGVNSAHIIDGRVPNAVLLEIFTDVGVGTLITNSQR.

Substrate contacts are provided by residues 68-69, Arg-90, and Asn-195; that span reads GG.

The protein belongs to the acetylglutamate kinase family. ArgB subfamily.

The protein resides in the cytoplasm. The enzyme catalyses N-acetyl-L-glutamate + ATP = N-acetyl-L-glutamyl 5-phosphate + ADP. It functions in the pathway amino-acid biosynthesis; L-arginine biosynthesis; N(2)-acetyl-L-ornithine from L-glutamate: step 2/4. Functionally, catalyzes the ATP-dependent phosphorylation of N-acetyl-L-glutamate. This chain is Acetylglutamate kinase, found in Stutzerimonas stutzeri (strain A1501) (Pseudomonas stutzeri).